The chain runs to 158 residues: Large ribosomal subunit protein mL50 (158 aa).

This sequence belongs to the mitochondrion-specific ribosomal protein mL50 family. In terms of assembly, component of the mitochondrial ribosome large subunit (39S) which comprises a 16S rRNA and about 50 distinct proteins.

The protein localises to the mitochondrion. This Pongo abelii (Sumatran orangutan) protein is Large ribosomal subunit protein mL50 (MRPL50).